The chain runs to 1059 residues: Translation initiation factor IF-2 (1059 aa).

2 stretches are compositionally biased toward polar residues: residues 55 to 75 and 107 to 126; these read LPHS…NQDS and KINN…NNQV. Disordered regions lie at residues 55 to 81, 93 to 394, and 418 to 468; these read LPHS…GYNE, PKPL…RLRL, and SLSL…QSAE. Residues 178–187 show a composition bias toward basic and acidic residues; the sequence is DSNEKSKVEV. A compositionally biased stretch (polar residues) spans 202–211; that stretch reads LNRNLRNTGV. A compositionally biased stretch (basic residues) spans 216–229; sequence QKNKKPKQEGKKRK. 2 stretches are compositionally biased toward basic and acidic residues: residues 230-252 and 259-273; these read DKEE…DTSI and SKKE…RESV. Polar residues predominate over residues 274–284; that stretch reads KTSASDTSSQL. Composition is skewed to basic and acidic residues over residues 291-300 and 359-368; these read KPTVKLKQEQ and LTKDKKVSKW. The span at 452–463 shows a compositional bias: low complexity; sequence SHESVQSESNEQ. The tr-type G domain occupies 556 to 733; the sequence is RRPPVVTIMG…EVEDLQANPE (178 aa). A G1 region spans residues 565 to 572; the sequence is GHVDHGKT. Residue 565–572 participates in GTP binding; that stretch reads GHVDHGKT. Residues 590 to 594 form a G2 region; it reads GITQH. The segment at 615 to 618 is G3; it reads DTPG. GTP is bound by residues 615–619 and 669–672; these read DTPGH and NKID. The G4 stretch occupies residues 669–672; the sequence is NKID. The G5 stretch occupies residues 705-707; that stretch reads SAI.

Belongs to the TRAFAC class translation factor GTPase superfamily. Classic translation factor GTPase family. IF-2 subfamily.

It localises to the cytoplasm. Its function is as follows. One of the essential components for the initiation of protein synthesis. Protects formylmethionyl-tRNA from spontaneous hydrolysis and promotes its binding to the 30S ribosomal subunits. Also involved in the hydrolysis of GTP during the formation of the 70S ribosomal complex. This chain is Translation initiation factor IF-2, found in Trichodesmium erythraeum (strain IMS101).